Consider the following 363-residue polypeptide: MVCFASLRRALPLLLRATTTTTPRFLLPRALSGGVGGGAAVDARALLRGHSGWRGLRVAARMMLDSSDSAAAAGQMQPQQRAAGAVACSAQDGGAAGYASGGWAREDGKLKCGYSSFRGKRATMEDFYDVKLTEIDGQAVSLFGVFDGHGGPRAAEYLKENLFENLLKHPEFLTDTKLAISETYQKTDTDFLESESNAFRDDGSTASTAVLVGGHLYVANVGDSRAVVSKAGKAMALSEDHKPNRSDERKRIENAGGVVIWAGTWRVGGVLAMSRAFGNRLLKPFVVAEPEIQEELVNEDLECLVLASDGLWDVVENEEAVSLAKTEDLPESVARKLTEIAYSRGSADNITCIVVQFHHDKTE.

A mitochondrion-targeting transit peptide spans 1-59; sequence MVCFASLRRALPLLLRATTTTTPRFLLPRALSGGVGGGAAVDARALLRGHSGWRGLRVA. The region spanning 111 to 357 is the PPM-type phosphatase domain; sequence KCGYSSFRGK…DNITCIVVQF (247 aa). 4 residues coordinate Mn(2+): D147, G148, D309, and D348.

It belongs to the PP2C family. The cofactor is Mg(2+). Requires Mn(2+) as cofactor. Highly expressed in mature pollen grains.

The protein localises to the mitochondrion. It carries out the reaction O-phospho-L-seryl-[protein] + H2O = L-seryl-[protein] + phosphate. The catalysed reaction is O-phospho-L-threonyl-[protein] + H2O = L-threonyl-[protein] + phosphate. Functionally, probable protein phosphatase that may play a role as a mitochondrial signal transduction mediator in pollen germination. May function in retrograde signaling from the mitochondria to the nucleus. May be a downstream factor of cytoplasmic male sterility (CMS). CMS is caused by genetic incompatibility between nuclei and mitochondria within male reproductive organs. This Oryza sativa subsp. japonica (Rice) protein is Probable protein phosphatase 2C member 13, mitochondrial.